We begin with the raw amino-acid sequence, 486 residues long: Siroheme synthase (486 aa).

Positions 1 to 204 are precorrin-2 dehydrogenase /sirohydrochlorin ferrochelatase; the sequence is MNYLPIFVDL…HQIEQAEALV (204 aa). Residues 22–23 and 43–44 each bind NAD(+); these read HV and EK. The residue at position 128 (Ser128) is a Phosphoserine. The interval 216-486 is uroporphyrinogen-III C-methyltransferase; that stretch reads GEVSLVGAGP…NKETHWKQAA (271 aa). Residue Pro225 coordinates S-adenosyl-L-methionine. Asp248 acts as the Proton acceptor in catalysis. Lys270 functions as the Proton donor in the catalytic mechanism. S-adenosyl-L-methionine is bound by residues 301–303, Val306, 331–332, Met383, and Gly412; these read GGD and TA.

It in the N-terminal section; belongs to the precorrin-2 dehydrogenase / sirohydrochlorin ferrochelatase family. The protein in the C-terminal section; belongs to the precorrin methyltransferase family.

It carries out the reaction uroporphyrinogen III + 2 S-adenosyl-L-methionine = precorrin-2 + 2 S-adenosyl-L-homocysteine + H(+). The enzyme catalyses precorrin-2 + NAD(+) = sirohydrochlorin + NADH + 2 H(+). It catalyses the reaction siroheme + 2 H(+) = sirohydrochlorin + Fe(2+). It functions in the pathway cofactor biosynthesis; adenosylcobalamin biosynthesis; precorrin-2 from uroporphyrinogen III: step 1/1. Its pathway is cofactor biosynthesis; adenosylcobalamin biosynthesis; sirohydrochlorin from precorrin-2: step 1/1. It participates in porphyrin-containing compound metabolism; siroheme biosynthesis; precorrin-2 from uroporphyrinogen III: step 1/1. The protein operates within porphyrin-containing compound metabolism; siroheme biosynthesis; siroheme from sirohydrochlorin: step 1/1. It functions in the pathway porphyrin-containing compound metabolism; siroheme biosynthesis; sirohydrochlorin from precorrin-2: step 1/1. In terms of biological role, multifunctional enzyme that catalyzes the SAM-dependent methylations of uroporphyrinogen III at position C-2 and C-7 to form precorrin-2 via precorrin-1. Then it catalyzes the NAD-dependent ring dehydrogenation of precorrin-2 to yield sirohydrochlorin. Finally, it catalyzes the ferrochelation of sirohydrochlorin to yield siroheme. This is Siroheme synthase from Actinobacillus pleuropneumoniae serotype 7 (strain AP76).